The sequence spans 160 residues: Putative pre-16S rRNA nuclease (160 aa).

It belongs to the YqgF nuclease family.

The protein resides in the cytoplasm. Could be a nuclease involved in processing of the 5'-end of pre-16S rRNA. In Cutibacterium acnes (strain DSM 16379 / KPA171202) (Propionibacterium acnes), this protein is Putative pre-16S rRNA nuclease.